The chain runs to 301 residues: uncharacterized protein (301 aa).

The HTH lysR-type domain maps to 1-58; that stretch reads MDIRHLTYFLEVARLKSFTKASQSLYVSQPTISKMIKNLEEELGIELFYRNGRQVELT. Residues 18–37 constitute a DNA-binding region (H-T-H motif); sequence FTKASQSLYVSQPTISKMIK.

Belongs to the LysR transcriptional regulatory family.

This is an uncharacterized protein from Bacillus subtilis (strain 168).